We begin with the raw amino-acid sequence, 103 residues long: Small ribosomal subunit protein uS10 (103 aa).

The protein belongs to the universal ribosomal protein uS10 family. As to quaternary structure, part of the 30S ribosomal subunit.

Its function is as follows. Involved in the binding of tRNA to the ribosomes. The protein is Small ribosomal subunit protein uS10 of Methylibium petroleiphilum (strain ATCC BAA-1232 / LMG 22953 / PM1).